A 636-amino-acid chain; its full sequence is Translation factor GUF1, mitochondrial (636 aa).

The tr-type G domain maps to 35 to 218 (SNYRNFSIVA…AIIRDIPGPR (184 aa)). GTP is bound by residues 44–51 (AHVDHGKS), 111–115 (DTPGH), and 165–168 (NKID).

It belongs to the TRAFAC class translation factor GTPase superfamily. Classic translation factor GTPase family. LepA subfamily.

Its subcellular location is the mitochondrion inner membrane. It carries out the reaction GTP + H2O = GDP + phosphate + H(+). In terms of biological role, promotes mitochondrial protein synthesis. May act as a fidelity factor of the translation reaction, by catalyzing a one-codon backward translocation of tRNAs on improperly translocated ribosomes. Binds to mitochondrial ribosomes in a GTP-dependent manner. This is Translation factor GUF1, mitochondrial from Debaryomyces hansenii (strain ATCC 36239 / CBS 767 / BCRC 21394 / JCM 1990 / NBRC 0083 / IGC 2968) (Yeast).